The chain runs to 462 residues: N-myc proto-oncogene protein (462 aa).

An interaction with AURKA region spans residues 19-47 (LEFDSLQPCFYPDEDDFYFGGPDSTPPGE). Positions 61–90 (LSPSRAFPEHSPEPSNWATEMLLPEADLWG) are interaction with AURKA and FBXW7. Positions 76 to 85 (NWATEMLLPE) match the 9aaTAD motif. Disordered regions lie at residues 133 to 177 (EKLQ…ATLP), 232 to 290 (AAPA…SNNK), and 332 to 390 (APSP…LERQ). The span at 138 to 174 (GHGPPGASSSCPAPGVGASSSGGRALGGSASAGRTGA) shows a compositional bias: low complexity. The span at 257-276 (TLSDSDDEDDEEEDEEEEID) shows a compositional bias: acidic residues. Phosphoserine; by CK2 is present on residues Ser-259 and Ser-261. A bHLH domain is found at 379-431 (ERRRNHNILERQRRNDLRSSFLTLRDHVPELVKNEKAAKVVILKKATEYVHAL). Residues 431 to 452 (LQANEHQLLLEKEKLQARQQQL) are leucine-zipper.

As to quaternary structure, efficient DNA binding requires dimerization with another bHLH protein. Binds DNA as a heterodimer with MAX. Interacts with KDM5A, KDM5B and HUWE1. Interacts with MYCNOS. Interacts with AURKA; interaction is phospho-independent and triggers AURKA activation; AURKA competes with FBXW7 for binding to unphosphorylated MYCN but not for binding to unphosphorylated MYCN. Interacts with FBXW7; FBXW7 competes with AURKA for binding to unphosphorylated MYCN but not for binding to phosphorylated MYCN. Phosphorylated by GSK3-beta which may promote its degradation. Phosphorylated by AURKA.

Its subcellular location is the nucleus. Positively regulates the transcription of MYCNOS in neuroblastoma cells. This is N-myc proto-oncogene protein (Mycn) from Rattus norvegicus (Rat).